A 161-amino-acid polypeptide reads, in one-letter code: 2-C-methyl-D-erythritol 2,4-cyclodiphosphate synthase (161 aa).

Positions 9 and 11 each coordinate a divalent metal cation. 4-CDP-2-C-methyl-D-erythritol 2-phosphate-binding positions include 9-11 (DFH) and 37-38 (HS). Residue His45 coordinates a divalent metal cation. 4-CDP-2-C-methyl-D-erythritol 2-phosphate is bound by residues 59–61 (DIG), 64–68 (FPDTD), 135–138 (TTTE), and Arg145.

This sequence belongs to the IspF family. Homotrimer. A divalent metal cation serves as cofactor.

It catalyses the reaction 4-CDP-2-C-methyl-D-erythritol 2-phosphate = 2-C-methyl-D-erythritol 2,4-cyclic diphosphate + CMP. The protein operates within isoprenoid biosynthesis; isopentenyl diphosphate biosynthesis via DXP pathway; isopentenyl diphosphate from 1-deoxy-D-xylulose 5-phosphate: step 4/6. Involved in the biosynthesis of isopentenyl diphosphate (IPP) and dimethylallyl diphosphate (DMAPP), two major building blocks of isoprenoid compounds. Catalyzes the conversion of 4-diphosphocytidyl-2-C-methyl-D-erythritol 2-phosphate (CDP-ME2P) to 2-C-methyl-D-erythritol 2,4-cyclodiphosphate (ME-CPP) with a corresponding release of cytidine 5-monophosphate (CMP). This is 2-C-methyl-D-erythritol 2,4-cyclodiphosphate synthase from Leptospira interrogans serogroup Icterohaemorrhagiae serovar Lai (strain 56601).